The chain runs to 291 residues: Diaminopimelate epimerase (291 aa).

Substrate is bound by residues Asn-11 and Asn-78. Cys-87 acts as the Proton donor in catalysis. Substrate contacts are provided by residues 88–89 (GN), Asn-166, Asn-200, and 218–219 (ER). The active-site Proton acceptor is the Cys-227. Residue 228 to 229 (GT) coordinates substrate.

This sequence belongs to the diaminopimelate epimerase family. As to quaternary structure, homodimer.

Its subcellular location is the cytoplasm. It catalyses the reaction (2S,6S)-2,6-diaminopimelate = meso-2,6-diaminopimelate. The protein operates within amino-acid biosynthesis; L-lysine biosynthesis via DAP pathway; DL-2,6-diaminopimelate from LL-2,6-diaminopimelate: step 1/1. Its function is as follows. Catalyzes the stereoinversion of LL-2,6-diaminopimelate (L,L-DAP) to meso-diaminopimelate (meso-DAP), a precursor of L-lysine and an essential component of the bacterial peptidoglycan. In Mycolicibacterium smegmatis (strain ATCC 700084 / mc(2)155) (Mycobacterium smegmatis), this protein is Diaminopimelate epimerase.